The following is a 501-amino-acid chain: MNGTSTTGNGFTNGTNYPVPKLELQPETTSTSPTRAQTHPLLPSVSDDELHDLICVGFGPASLAIAIALHDRLLETAHSPDITTVPKICFLEKQSNFAWHSGMLLPGSKMQISFIKDLATIRNPRSEFTFLNYLQVHDRLLDFANLGTFLPARIEFEDYMKWCASKFANLVRYRTEVLDVTPSEVDPVTGKVHFFTVRSKVLETGEVTTRKARHVVVAIGGKPNIPAEFPTNSRIIHSSAYCTTLPSLLNNTLKEYSIAVAGSGQSAAEIFHDLQKRYPNAKTSLIMRDSALRPSDDSPFPSVNELFNPERVDQFFNQSEKERQHFLERHRSTNYSVVRPELIEQIYADMYIQKIQYPDETQWQHRIFSSCLISKVDSDKSEKLNLSLQHCHSENTTMNGTHNEEMNADALILATGYVRNAHESILASIEPLLAQKHMGWKVQRNYRLELDKNQVDVDAGIWLQGCNESTHGLSDSLLSILAVRGAEIVQAIFGAQISNGN.

Over residues Met-1–Asn-16 the composition is skewed to low complexity. Residues Met-1 to Pro-40 form a disordered region. Residues Pro-26–Gln-37 show a composition bias toward polar residues. Residues Glu-92–His-100 and Gln-111 contribute to the FAD site. Position 116 (Lys-116) interacts with substrate. An FAD-binding site is contributed by Val-177. Ser-263–Ser-266 contacts NADP(+). Substrate is bound by residues Asn-304 to Phe-307 and Asn-334. Asn-334–Ser-336 serves as a coordination point for NADP(+). FAD is bound at residue Ser-476–Leu-478. Ser-479 contributes to the substrate binding site.

It belongs to the lysine N(6)-hydroxylase/L-ornithine N(5)-oxygenase family. Homotetramer. The cofactor is FAD.

The catalysed reaction is L-ornithine + NADPH + O2 = N(5)-hydroxy-L-ornithine + NADP(+) + H2O. It catalyses the reaction L-ornithine + NADH + O2 = N(5)-hydroxy-L-ornithine + NAD(+) + H2O. It participates in siderophore biosynthesis. In terms of biological role, L-ornithine N(5)-monooxygenase; part of the siderophore biosynthetic pathway. Arthroderma benhamiae produces 2 types of extracellular siderophores, ferrichrome C and ferricrocin. The biosynthesis of these siderophores depends on the hydroxylation of ornithine to N(5)-hydroxyornithine, catalyzed by the monooxygenase sidA. The structure of ferricrocin differs from ferrichrome C only by a serine for alanine substitution and the assembly of both siderophores is suggested to be performed by the nonribosomal peptide synthase (NRPS) sidC. This Arthroderma benhamiae (strain ATCC MYA-4681 / CBS 112371) (Trichophyton mentagrophytes) protein is L-ornithine N(5)-monooxygenase.